A 92-amino-acid chain; its full sequence is Precursor of CEP12 (92 aa).

A signal peptide spans 1–30 (MVNRDNSIVALSFFMLFLLVLHLHFETTTA). The propeptide occupies 31–70 (ARKPVRVFGPPSSIEWSPPSPPKDDFEWFEINIYKNIEQT). Residues 70–92 (TAFRPTGQGPSQGIGHKDPPGAP) form a disordered region. Residues Pro74 and Pro79 each carry the hydroxyproline modification. Positions 86–92 (KDPPGAP) are excised as a propeptide.

Belongs to the C-terminally encoded plant signaling peptide (CEP) family. As to quaternary structure, interacts with CEP receptors (e.g. CEPR1 and CEPR2). In terms of processing, the mature small signaling peptide is generated by proteolytic processing of the longer precursor.

The protein localises to the secreted. It is found in the extracellular space. Its subcellular location is the apoplast. Its function is as follows. Extracellular signaling peptide that may regulate primary root growth rate and systemic nitrogen (N)-demand signaling. The polypeptide is Precursor of CEP12 (Arabidopsis thaliana (Mouse-ear cress)).